The sequence spans 189 residues: Development-specific protein LVN1.2 (189 aa).

Endoderm cells.

This chain is Development-specific protein LVN1.2, found in Lytechinus variegatus (Green sea urchin).